The chain runs to 223 residues: 2-C-methyl-D-erythritol 4-phosphate cytidylyltransferase (223 aa).

The protein belongs to the IspD/TarI cytidylyltransferase family. IspD subfamily.

The catalysed reaction is 2-C-methyl-D-erythritol 4-phosphate + CTP + H(+) = 4-CDP-2-C-methyl-D-erythritol + diphosphate. It functions in the pathway isoprenoid biosynthesis; isopentenyl diphosphate biosynthesis via DXP pathway; isopentenyl diphosphate from 1-deoxy-D-xylulose 5-phosphate: step 2/6. Functionally, catalyzes the formation of 4-diphosphocytidyl-2-C-methyl-D-erythritol from CTP and 2-C-methyl-D-erythritol 4-phosphate (MEP). This chain is 2-C-methyl-D-erythritol 4-phosphate cytidylyltransferase, found in Prochlorococcus marinus (strain MIT 9215).